The following is a 185-amino-acid chain: Lipid A acyltransferase PagP (185 aa).

The first 14 residues, 1–14 (MKLKPVLYLLMLLG), serve as a signal peptide directing secretion. Cysteine 15 is lipidated: N-palmitoyl cysteine. Cysteine 15 carries S-diacylglycerol cysteine lipidation. Catalysis depends on residues histidine 57, aspartate 100, and serine 101.

Belongs to the lipid A palmitoyltransferase family. Homodimer.

The protein localises to the cell outer membrane. The catalysed reaction is a lipid A + a 1,2-diacyl-sn-glycero-3-phosphocholine = a hepta-acyl lipid A + a 2-acyl-sn-glycero-3-phosphocholine. The enzyme catalyses a lipid IVA + a 1,2-diacyl-sn-glycero-3-phosphocholine = a lipid IVB + a 2-acyl-sn-glycero-3-phosphocholine. It carries out the reaction a lipid IIA + a 1,2-diacyl-sn-glycero-3-phosphocholine = a lipid IIB + a 2-acyl-sn-glycero-3-phosphocholine. Functionally, transfers a fatty acid residue from the sn-1 position of a phospholipid to the N-linked hydroxyfatty acid chain on the proximal unit of lipid A or its precursors. The chain is Lipid A acyltransferase PagP from Erwinia pyrifoliae (strain DSM 12163 / CIP 106111 / Ep16/96).